A 97-amino-acid polypeptide reads, in one-letter code: MARVTVEDCLEHVENRFDLVLKAAKRAHILELGGAEPMVPRDNDKPAVLALREIAAGYDVTREGQEQETEEVDVDRNVLAETAKMNKAVASQKESEV.

Belongs to the RNA polymerase subunit omega family. In terms of assembly, the RNAP catalytic core consists of 2 alpha, 1 beta, 1 beta' and 1 omega subunit. When a sigma factor is associated with the core the holoenzyme is formed, which can initiate transcription.

The enzyme catalyses RNA(n) + a ribonucleoside 5'-triphosphate = RNA(n+1) + diphosphate. Promotes RNA polymerase assembly. Latches the N- and C-terminal regions of the beta' subunit thereby facilitating its interaction with the beta and alpha subunits. The protein is DNA-directed RNA polymerase subunit omega of Coxiella burnetii (strain CbuK_Q154) (Coxiella burnetii (strain Q154)).